We begin with the raw amino-acid sequence, 357 residues long: Glutamate 5-kinase (357 aa).

Lys-7 is a binding site for ATP. The substrate site is built by Ser-43, Asp-130, and Asn-142. Residues 162 to 163 (TD) and 205 to 211 (TGGMTTK) each bind ATP. The PUA domain occupies 270 to 353 (EGELQLDAGA…PVVVHRDGLV (84 aa)).

Belongs to the glutamate 5-kinase family.

The protein resides in the cytoplasm. The enzyme catalyses L-glutamate + ATP = L-glutamyl 5-phosphate + ADP. The protein operates within amino-acid biosynthesis; L-proline biosynthesis; L-glutamate 5-semialdehyde from L-glutamate: step 1/2. Catalyzes the transfer of a phosphate group to glutamate to form L-glutamate 5-phosphate. The polypeptide is Glutamate 5-kinase (Synechococcus sp. (strain CC9605)).